Consider the following 176-residue polypeptide: Cell division control protein 31 (176 aa).

Basic residues predominate over residues 1-12 (MFANARAKRRSR). A disordered region spans residues 1 to 21 (MFANARAKRRSRASSPTPARL). 4 EF-hand domains span residues 34–69 (EQRQDINEAFKLFDSDKDNAIDYHELRAAMRALGFN), 70–105 (AEKSEVLKILRDFDKTGKGYLQMEDFVRVMTEKIVE), 107–142 (DPLEEIKRAFELFDDDETGKISLRNLRRVAKELNEN), and 143–176 (IDDQELEAMIEEFDLDQDGEINEQEFIAIMMDEA). Ca(2+) is bound by residues aspartate 47, aspartate 49, aspartate 51, and glutamate 58. Ca(2+) contacts are provided by aspartate 156, aspartate 158, aspartate 160, glutamate 162, and glutamate 167.

It belongs to the centrin family. As to quaternary structure, component of the spindle pole body (SPB), acting as the connector of microtubule arrays in the cytoplasm and the nucleoplasm, is involved in nuclear positioning before chromosome segregation, SPB separation, spindle formation, chromosome segregation, nuclear migration into the bud, nuclear reorientation after cytokinesis and nuclear fusion during conjugation. The SPB half-bridge, which is tightly associated with the cytoplasmic side of the nuclear envelope and the SPB, is playing a key role as the starting structure for and in the initiation of SPB duplication in G1. Within the complex, interacts with sad1.

It localises to the nucleus. Required for the proper coordination between exit from mitosis and the initiation of septation. Has a role in bipolar spindle formation during spindle pole body (SPB) duplication. Required for the localization of sad1 to the SPB. The protein is Cell division control protein 31 (cdc31) of Schizosaccharomyces pombe (strain 972 / ATCC 24843) (Fission yeast).